We begin with the raw amino-acid sequence, 312 residues long: Malate dehydrogenase (312 aa).

Residues 7–13 (GAAGGIG) and aspartate 34 each bind NAD(+). Residues arginine 81 and arginine 87 each coordinate substrate. NAD(+) is bound by residues asparagine 94 and 117 to 119 (ITN). The substrate site is built by asparagine 119 and arginine 153. Histidine 177 (proton acceptor) is an active-site residue. Methionine 227 contributes to the NAD(+) binding site.

Belongs to the LDH/MDH superfamily. MDH type 1 family. In terms of assembly, homodimer.

It catalyses the reaction (S)-malate + NAD(+) = oxaloacetate + NADH + H(+). Catalyzes the reversible oxidation of malate to oxaloacetate. This is Malate dehydrogenase from Escherichia coli (strain 55989 / EAEC).